We begin with the raw amino-acid sequence, 394 residues long: G2/mitotic-specific cyclin-B2 (394 aa).

This sequence belongs to the cyclin family. Cyclin AB subfamily. In terms of assembly, interacts with the CDK1 protein kinase to form a serine/threonine kinase holoenzyme complex also known as maturation promoting factor (MPF). The cyclin subunit imparts substrate specificity to the complex.

Its function is as follows. Essential for the control of the cell cycle at the G2/M (mitosis) transition. The polypeptide is G2/mitotic-specific cyclin-B2 (ccnb2) (Anguilla japonica (Japanese eel)).